The sequence spans 87 residues: UPF0250 protein ECA1299 (87 aa).

The protein belongs to the UPF0250 family.

This is UPF0250 protein ECA1299 from Pectobacterium atrosepticum (strain SCRI 1043 / ATCC BAA-672) (Erwinia carotovora subsp. atroseptica).